The primary structure comprises 365 residues: Putative DNA-directed RNA polymerase subunit alpha-like 3 (365 aa).

This sequence belongs to the RNA polymerase alpha chain family. In terms of assembly, in plastids the minimal PEP RNA polymerase catalytic core is composed of four subunits: alpha, beta, beta', and beta''. When a (nuclear-encoded) sigma factor is associated with the core the holoenzyme is formed, which can initiate transcription.

It is found in the plastid. Its subcellular location is the chloroplast. The enzyme catalyses RNA(n) + a ribonucleoside 5'-triphosphate = RNA(n+1) + diphosphate. Functionally, DNA-dependent RNA polymerase catalyzes the transcription of DNA into RNA using the four ribonucleoside triphosphates as substrates. The polypeptide is Putative DNA-directed RNA polymerase subunit alpha-like 3 (rpoAL3-A) (Pelargonium hortorum (Common geranium)).